The primary structure comprises 205 residues: Adenylyl-sulfate kinase (205 aa).

31 to 38 (GLSGAGKS) is an ATP binding site. Serine 105 acts as the Phosphoserine intermediate in catalysis.

This sequence belongs to the APS kinase family.

It catalyses the reaction adenosine 5'-phosphosulfate + ATP = 3'-phosphoadenylyl sulfate + ADP + H(+). It participates in sulfur metabolism; hydrogen sulfide biosynthesis; sulfite from sulfate: step 2/3. Catalyzes the synthesis of activated sulfate. This is Adenylyl-sulfate kinase from Shewanella baltica (strain OS223).